A 996-amino-acid polypeptide reads, in one-letter code: Protein psiR (996 aa).

Positions 1 to 21 (MKKIILMLLLFSIFFILKSES) are cleaved as a signal peptide. 9 N-linked (GlcNAc...) asparagine glycosylation sites follow: asparagine 79, asparagine 117, asparagine 323, asparagine 396, asparagine 428, asparagine 474, asparagine 500, asparagine 645, and asparagine 779. The 146-residue stretch at 105 to 250 (QSLSNPNIYS…YDECGVCEGD (146 aa)) folds into the PA14 domain.

The protein belongs to the prespore-cell-inducing factor family.

It localises to the secreted. The chain is Protein psiR (psiR) from Dictyostelium discoideum (Social amoeba).